A 311-amino-acid chain; its full sequence is Purine nucleoside phosphorylase (311 aa).

S2 is modified (N-acetylserine). Phosphate-binding positions include S46, H81, 101–103 (RLH), and A134. A purine D-ribonucleoside is bound at residue E219. Residue S238 coordinates phosphate. Residue N261 coordinates a purine D-ribonucleoside. The residue at position 275 (S275) is a Phosphoserine.

Belongs to the PNP/MTAP phosphorylase family.

The catalysed reaction is a purine D-ribonucleoside + phosphate = a purine nucleobase + alpha-D-ribose 1-phosphate. Its pathway is purine metabolism; purine nucleoside salvage. Functionally, the purine nucleoside phosphorylases catalyze the phosphorolytic breakdown of the N-glycosidic bond in the beta-(deoxy)ribonucleoside molecules, with the formation of the corresponding free purine bases and pentose-1-phosphate. Cleaves guanosine and inosine. This Saccharomyces cerevisiae (strain ATCC 204508 / S288c) (Baker's yeast) protein is Purine nucleoside phosphorylase (PNP1).